Consider the following 276-residue polypeptide: Undecaprenyl-diphosphatase (276 aa).

The next 7 helical transmembrane spans lie at 40-60 (GLAF…TFFW), 98-118 (WLII…KDAI), 121-141 (IFRG…VLYY), 155-175 (MSFK…FPGI), 200-220 (FLLS…DIAT), 227-247 (VLLA…KLLM), and 255-275 (LDIF…LSVV).

The protein belongs to the UppP family.

It is found in the cell membrane. It carries out the reaction di-trans,octa-cis-undecaprenyl diphosphate + H2O = di-trans,octa-cis-undecaprenyl phosphate + phosphate + H(+). Its function is as follows. Catalyzes the dephosphorylation of undecaprenyl diphosphate (UPP). In Methanosphaera stadtmanae (strain ATCC 43021 / DSM 3091 / JCM 11832 / MCB-3), this protein is Undecaprenyl-diphosphatase.